A 37-amino-acid chain; its full sequence is MVEPLLSGIVLGLITVSALGLFVAAFLQYRRGNQFEI.

A helical transmembrane segment spans residues 5–25 (LLSGIVLGLITVSALGLFVAA).

The protein belongs to the PetG family. As to quaternary structure, the 4 large subunits of the cytochrome b6-f complex are cytochrome b6, subunit IV (17 kDa polypeptide, PetD), cytochrome f and the Rieske protein, while the 4 small subunits are PetG, PetL, PetM and PetN. The complex functions as a dimer.

It is found in the plastid. It localises to the chloroplast thylakoid membrane. Its function is as follows. Component of the cytochrome b6-f complex, which mediates electron transfer between photosystem II (PSII) and photosystem I (PSI), cyclic electron flow around PSI, and state transitions. PetG is required for either the stability or assembly of the cytochrome b6-f complex. The protein is Cytochrome b6-f complex subunit 5 of Phaeodactylum tricornutum (strain CCAP 1055/1).